We begin with the raw amino-acid sequence, 625 residues long: UvrABC system protein C (625 aa).

In terms of domain architecture, GIY-YIG spans 13-92 (DKPGVYIMKD…IKKHRPKFNI (80 aa)). The UVR domain maps to 204–239 (EDIIKKLEKDMKEAADNLEFERAARIRDKINSLKHI).

It belongs to the UvrC family. Interacts with UvrB in an incision complex.

It localises to the cytoplasm. The UvrABC repair system catalyzes the recognition and processing of DNA lesions. UvrC both incises the 5' and 3' sides of the lesion. The N-terminal half is responsible for the 3' incision and the C-terminal half is responsible for the 5' incision. The protein is UvrABC system protein C of Acetivibrio thermocellus (strain ATCC 27405 / DSM 1237 / JCM 9322 / NBRC 103400 / NCIMB 10682 / NRRL B-4536 / VPI 7372) (Clostridium thermocellum).